Here is a 201-residue protein sequence, read N- to C-terminus: Glutathione S-transferase (201 aa).

The GST N-terminal domain maps to 1–81; the sequence is MKLYYKVGAC…YIGDHSDVAA (81 aa). Glutathione-binding positions include Cys10, Lys35, Val52, 65 to 66, and 102 to 105; these read QN and SDLH. Positions 87 to 201 constitute a GST C-terminal domain; the sequence is GSIERARLQE…QKAFKEEGLN (115 aa).

Belongs to the GST superfamily. Beta family. Homodimer.

It localises to the cytoplasm. The enzyme catalyses RX + glutathione = an S-substituted glutathione + a halide anion + H(+). Its function is as follows. Conjugation of reduced glutathione to a wide number of exogenous and endogenous hydrophobic electrophiles. In Brucella anthropi (Ochrobactrum anthropi), this protein is Glutathione S-transferase (gst).